The chain runs to 192 residues: MCFSQAETLVNYSFGTCQHRKIFPHFFPSDLLGNKFLPIRGVPHRGPGCYIAEESKDLAYSLAKIPTSIKGYGFGARTAVRFKPKNKDVTPYPGMYQTVNLQEQTHKPNFAPFNTLSPRFRTYSKDPCYPGPGTYKLEKKEPQKVTWPMKFGSPDWSQVPCLQKRTLKTELSTDKDFRKHRNRLAYLSLYYN.

As to quaternary structure, interacts with proteins involved in ciliary transport, including ARL13B, CETN1, KIF3A, RAB6A, RAB8A, TUBB1 and TUBG1. Interacts with AURKA.

The protein localises to the cytoplasmic vesicle. It is found in the golgi apparatus. Its subcellular location is the trans-Golgi network. It localises to the cytoplasm. Functionally, during primary cilia disassembly, involved in cilia disassembly. Required specifically to control cilia retraction as well as the liberation and duplication of the basal body/centrosome. May act by stimulating AURKA activity at the basal body in a cell cycle-dependent manner. This is Ciliary microtubule-associated protein 3 (CIMAP3) from Bos taurus (Bovine).